A 209-amino-acid chain; its full sequence is Large ribosomal subunit protein bL25 (209 aa).

The disordered stretch occupies residues threonine 183 to glutamate 209. Positions alanine 184–glutamate 209 are enriched in low complexity.

The protein belongs to the bacterial ribosomal protein bL25 family. CTC subfamily. Part of the 50S ribosomal subunit; part of the 5S rRNA/L5/L18/L25 subcomplex. Contacts the 5S rRNA. Binds to the 5S rRNA independently of L5 and L18.

Functionally, this is one of the proteins that binds to the 5S RNA in the ribosome where it forms part of the central protuberance. This is Large ribosomal subunit protein bL25 from Pelotomaculum thermopropionicum (strain DSM 13744 / JCM 10971 / SI).